Here is a 307-residue protein sequence, read N- to C-terminus: Shikimate kinase 2, chloroplastic (307 aa).

A chloroplast-targeting transit peptide spans 1 to 60 (MEARAGLAMQSRAAVGVGAGPGVGRRGRAVIRVGKRPTAASLRVGGPAGPAAAKPLAPLY). Residue 101–108 (GMMGSGKS) coordinates ATP. Ser-108 contacts Mg(2+). Asp-126, Arg-151, and Gly-173 together coordinate substrate. An ATP-binding site is contributed by Arg-212. A disordered region spans residues 285–307 (HSTSSGPVGDLIVDSQNRRTKAL).

Belongs to the shikimate kinase family. Requires Mg(2+) as cofactor. As to expression, expressed in panicles.

It localises to the plastid. The protein localises to the chloroplast. The enzyme catalyses shikimate + ATP = 3-phosphoshikimate + ADP + H(+). It functions in the pathway metabolic intermediate biosynthesis; chorismate biosynthesis; chorismate from D-erythrose 4-phosphate and phosphoenolpyruvate: step 5/7. Its function is as follows. Catalyzes the specific phosphorylation of the 3-hydroxyl group of shikimic acid using ATP as a cosubstrate. The sequence is that of Shikimate kinase 2, chloroplastic (SK2) from Oryza sativa subsp. japonica (Rice).